Reading from the N-terminus, the 148-residue chain is uncharacterized protein (148 aa).

The segment covering 65–79 (VDSTPSVDSTGSTSD) has biased composition (low complexity). Residues 65 to 85 (VDSTPSVDSTGSTSDVVDDRG) are disordered.

This is an uncharacterized protein from Saccharomyces cerevisiae (strain ATCC 204508 / S288c) (Baker's yeast).